Reading from the N-terminus, the 157-residue chain is Protein EOLA1 (157 aa).

One can recognise an ASCH domain in the interval L6–T92.

Belongs to the EOLA family. As to quaternary structure, interacts with MT2A.

Its function is as follows. May play a role in cell protection during the inflammatory response. In epithelial cells, negatively regulates IL6 production and apoptosis through the regulation of MT2A expression. This Mus musculus (Mouse) protein is Protein EOLA1.